The primary structure comprises 343 residues: Phenylalanine--tRNA ligase alpha subunit (343 aa).

A Mg(2+)-binding site is contributed by Glu256.

Belongs to the class-II aminoacyl-tRNA synthetase family. Phe-tRNA synthetase alpha subunit type 1 subfamily. In terms of assembly, tetramer of two alpha and two beta subunits. Requires Mg(2+) as cofactor.

Its subcellular location is the cytoplasm. It carries out the reaction tRNA(Phe) + L-phenylalanine + ATP = L-phenylalanyl-tRNA(Phe) + AMP + diphosphate + H(+). The polypeptide is Phenylalanine--tRNA ligase alpha subunit (Prosthecochloris aestuarii (strain DSM 271 / SK 413)).